A 186-amino-acid chain; its full sequence is Ribosome-recycling factor (186 aa).

It belongs to the RRF family.

It is found in the cytoplasm. In terms of biological role, responsible for the release of ribosomes from messenger RNA at the termination of protein biosynthesis. May increase the efficiency of translation by recycling ribosomes from one round of translation to another. In Endomicrobium trichonymphae, this protein is Ribosome-recycling factor.